Reading from the N-terminus, the 167-residue chain is MLNRVVLVGRLTKDPEYRTTPSGVSVATFTLAVNRTFTNAQGEREADFINCVVFRRQADNVNNYLSKGSLAGVDGRLQSRNYENQEGRRVFVTEVVCDSVQFLEPKNAQQNGGQRQQNEFQDYGQGFGGQQSGQNNSYNNSSNTKQSDNPFANANGPIDISDDDLPF.

The region spanning 1-104 (MLNRVVLVGR…VVCDSVQFLE (104 aa)) is the SSB domain. The interval 107–167 (NAQQNGGQRQ…IDISDDDLPF (61 aa)) is disordered. 2 stretches are compositionally biased toward low complexity: residues 109 to 118 (QQNGGQRQQN) and 132 to 147 (SGQNNSYNNSSNTKQS). The Important for interaction with partner proteins signature appears at 162-167 (DDDLPF).

Homotetramer.

Plays an important role in DNA replication, recombination and repair. Binds to ssDNA and to an array of partner proteins to recruit them to their sites of action during DNA metabolism. The chain is Single-stranded DNA-binding protein 2 (ssb2) from Staphylococcus aureus (strain MSSA476).